The sequence spans 544 residues: 4-coumarate:CoA ligase 1 (544 aa).

The protein belongs to the ATP-dependent AMP-binding enzyme family. Monomer. As to expression, mostly expressed in flower organs, with highest levels in corollas, and, to a lesser extent, in tubes, sepals, pistils, stamen and ovaries. Also present at low levels in leaves.

The protein resides in the cytoplasm. Its subcellular location is the cytosol. The catalysed reaction is (E)-4-coumarate + ATP + CoA = (E)-4-coumaroyl-CoA + AMP + diphosphate. It carries out the reaction (E)-caffeate + ATP + CoA = (E)-caffeoyl-CoA + AMP + diphosphate. The enzyme catalyses benzoate + ATP + CoA = benzoyl-CoA + AMP + diphosphate. It catalyses the reaction (E)-cinnamate + ATP + CoA = (E)-cinnamoyl-CoA + AMP + diphosphate. The catalysed reaction is (E)-ferulate + ATP + CoA = (E)-feruloyl-CoA + AMP + diphosphate. Its pathway is phenylpropanoid metabolism; trans-cinnamate biosynthesis. It participates in phytoalexin biosynthesis; 3,4',5-trihydroxystilbene biosynthesis; 3,4',5-trihydroxystilbene from trans-4-coumarate: step 1/2. Functionally, catalyzes the formation of CoA esters of trans-cinnamic acid, 4-coumaric acid, ferulic acid, benzoic acid and caffeic acid. This Petunia hybrida (Petunia) protein is 4-coumarate:CoA ligase 1.